The chain runs to 588 residues: Transport ATP-binding protein AarD (588 aa).

In terms of domain architecture, ABC transmembrane type-1 spans Leu-24–Gln-316. Transmembrane regions (helical) follow at residues Leu-29–Leu-49, Leu-62–Ile-82, Ile-149–Leu-169, Phe-170–Ala-190, Ser-250–Phe-270, and Leu-276–Leu-296. Positions Ile-350 to His-583 constitute an ABC transporter domain. Gly-383–Ser-390 lines the ATP pocket.

The protein belongs to the ABC transporter superfamily.

It is found in the cell inner membrane. In terms of biological role, somehow involved in the cytochrome D branch of aerobic respiration. Seems to be a component of a transport system. The chain is Transport ATP-binding protein AarD (aarD) from Providencia stuartii.